We begin with the raw amino-acid sequence, 409 residues long: Elongation factor Tu (409 aa).

A tr-type G domain is found at 10–214 (KPHLNIGTIG…AVDSFIPTPE (205 aa)). The G1 stretch occupies residues 19–26 (GHVDHGKT). Position 19–26 (19–26 (GHVDHGKT)) interacts with GTP. Mg(2+) is bound at residue Thr26. A G2 region spans residues 60-64 (GITIN). The interval 81 to 84 (DCPG) is G3. Residues 81-85 (DCPGH) and 136-139 (NKED) each bind GTP. The tract at residues 136–139 (NKED) is G4. The segment at 174–176 (SGL) is G5.

Belongs to the TRAFAC class translation factor GTPase superfamily. Classic translation factor GTPase family. EF-Tu/EF-1A subfamily. As to quaternary structure, monomer.

Its subcellular location is the cytoplasm. It catalyses the reaction GTP + H2O = GDP + phosphate + H(+). Its function is as follows. GTP hydrolase that promotes the GTP-dependent binding of aminoacyl-tRNA to the A-site of ribosomes during protein biosynthesis. This is Elongation factor Tu from Nostoc punctiforme (strain ATCC 29133 / PCC 73102).